The sequence spans 357 residues: NADPH HC-toxin reductase 1 (357 aa).

Residues R40, K47, 68-69, 88-90, Y178, K182, 207-210, and T222 contribute to the NADP(+) site; these read DL, VAT, and LGLV. K182 acts as the Proton donor in catalysis.

Belongs to the NAD(P)-dependent epimerase/dehydratase family.

With respect to regulation, activity is sensitive to heat, dependent on NADPH, and inhibited by p-hydroxymercuribenzoate and disulfiram. Its function is as follows. In tandem with Hm2, NADPH-dependent Helminthosporium carbonum (HC) toxin reductase (HCTR), which inactivates HC toxin, a cyclic tetrapeptide produced by the fungus Cochliobolus carbonum to permit infection and acting as an inhibitor of host histone deacetylases (HDACs), thus conferring resistance against C.carbonum race 1 in resistant cultivars (e.g. cv. B73 and cv. Wisconsin 22). Catalyzes the production of 8-hydroxy derivative of HC-toxin via the reduction of the 8-keto group of 2-amino-9,10-epoxy-8-oxo-decanoic acid, an amino acid of the HC-toxin. The polypeptide is NADPH HC-toxin reductase 1 (Zea mays (Maize)).